The primary structure comprises 171 residues: PBAN-type neuropeptides (171 aa).

Positions 1–22 (MFRLYFFFNVICIFLAIRSAIG) are cleaved as a signal peptide. A propeptide spanning residues 23 to 47 (GEVPDATEQKINNFLASGKDSEDLS) is cleaved from the precursor. A Leucine amide modification is found at leucine 59. A propeptide spanning residues 63-111 (TIASELHDEMMDEIDDNPLYYSGESPQRVASEIAQGTPYVVLLLTGRVL) is cleaved from the precursor. A disordered region spans residues 120–151 (HSTTPRLGRRDASSSNENNSRPPFAPRLGRNL). A leucine amide mark is found at leucine 126, leucine 147, and leucine 157. Residues 160–171 (SFGAPVVDNFAY) constitute a propeptide that is removed on maturation.

The protein belongs to the pyrokinin family.

The protein localises to the secreted. Its function is as follows. A hormone that controls sex pheromone production in females and pheromone responsiveness in male. Also mediates visceral muscle contractile activity (myotropic activity). The polypeptide is PBAN-type neuropeptides (Aedes aegypti (Yellowfever mosquito)).